Consider the following 309-residue polypeptide: Protein FdhE (309 aa).

The protein belongs to the FdhE family.

It is found in the cytoplasm. Its function is as follows. Necessary for formate dehydrogenase activity. The protein is Protein FdhE of Salmonella paratyphi A (strain ATCC 9150 / SARB42).